Reading from the N-terminus, the 132-residue chain is Small ribosomal subunit protein eS24 (132 aa).

A disordered region spans residues 91-132 (LATHGLYEKKKTSRKQRTERQNRMKKVRSIKKASVGAAGKKN). The segment covering 96-112 (LYEKKKTSRKQRTERQN) has biased composition (basic and acidic residues).

This sequence belongs to the eukaryotic ribosomal protein eS24 family. In terms of assembly, component of the small ribosomal subunit.

Its subcellular location is the cytoplasm. Functionally, component of the small ribosomal subunit. The ribosome is a large ribonucleoprotein complex responsible for the synthesis of proteins in the cell. Required for processing of pre-rRNA and maturation of 40S ribosomal subunits. In Oryzias latipes (Japanese rice fish), this protein is Small ribosomal subunit protein eS24 (rps24).